Reading from the N-terminus, the 179-residue chain is Large ribosomal subunit protein uL6 (179 aa).

It belongs to the universal ribosomal protein uL6 family. In terms of assembly, part of the 50S ribosomal subunit.

Its function is as follows. This protein binds to the 23S rRNA, and is important in its secondary structure. It is located near the subunit interface in the base of the L7/L12 stalk, and near the tRNA binding site of the peptidyltransferase center. The protein is Large ribosomal subunit protein uL6 of Leptospira biflexa serovar Patoc (strain Patoc 1 / ATCC 23582 / Paris).